We begin with the raw amino-acid sequence, 137 residues long: Large ribosomal subunit protein uL16 (137 aa).

It belongs to the universal ribosomal protein uL16 family. As to quaternary structure, part of the 50S ribosomal subunit.

Its function is as follows. Binds 23S rRNA and is also seen to make contacts with the A and possibly P site tRNAs. The protein is Large ribosomal subunit protein uL16 of Leuconostoc mesenteroides subsp. mesenteroides (strain ATCC 8293 / DSM 20343 / BCRC 11652 / CCM 1803 / JCM 6124 / NCDO 523 / NBRC 100496 / NCIMB 8023 / NCTC 12954 / NRRL B-1118 / 37Y).